Here is a 264-residue protein sequence, read N- to C-terminus: Small ribosomal subunit protein uS2 (264 aa).

Belongs to the universal ribosomal protein uS2 family.

This is Small ribosomal subunit protein uS2 (rpsB) from Helicobacter pylori (strain ATCC 700392 / 26695) (Campylobacter pylori).